Here is a 389-residue protein sequence, read N- to C-terminus: MSLSLNEYLRYGRQLIVPEFGLQGQISLKNSRVLVVGAGGLGCPALQYLVGAGFGTVGIVDHDTVDISNLHRQILHTSETVEMLKCESAKLQLAKLNPLVQINTHPVALSPDNSFGIFEQYDIILDCTDTPATRYLINDTAVLLGLTVISGSGLKTEGQLSILNFNNTGPCYRCFYPTPPPPSSVTACSDGGVLGPVIGIMGVMMALEAIKVVSGYYLREDVEFQPFLSLYSGYGPLQSLRTFKMRRRSPKCRVCNAGTREITRHVIETELDYAVWCGKMDYNVLEKDERVSVEQLSAQRAPYLVDVRAKEQYSIVHLPNSINIPLNALKHMDTLDVPKETMIYVICRFGNDSQLAVKHLKSIGYENCVDVIGGLTQWSRQIDPNFPIY.

ATP-binding positions include Gly-40, Asp-61, 68–72 (SNLHR), Lys-85, and 129–130 (DT). Cys-171 and Cys-174 together coordinate Zn(2+). Catalysis depends on Cys-188, which acts as the Glycyl thioester intermediate; for adenylyltransferase activity. Zn(2+) contacts are provided by Cys-252 and Cys-255. One can recognise a Rhodanese domain in the interval 298–387 (AQRAPYLVDV…WSRQIDPNFP (90 aa)). The Cysteine persulfide intermediate role is filled by Cys-347.

This sequence in the N-terminal section; belongs to the HesA/MoeB/ThiF family. UBA4 subfamily. The cofactor is Zn(2+).

Its subcellular location is the cytoplasm. It is found in the cytosol. It catalyses the reaction [molybdopterin-synthase sulfur-carrier protein]-C-terminal Gly-Gly + ATP + H(+) = [molybdopterin-synthase sulfur-carrier protein]-C-terminal Gly-Gly-AMP + diphosphate. The catalysed reaction is [molybdopterin-synthase sulfur-carrier protein]-C-terminal Gly-Gly-AMP + S-sulfanyl-L-cysteinyl-[cysteine desulfurase] + AH2 = [molybdopterin-synthase sulfur-carrier protein]-C-terminal-Gly-aminoethanethioate + L-cysteinyl-[cysteine desulfurase] + A + AMP + 2 H(+). Its pathway is tRNA modification; 5-methoxycarbonylmethyl-2-thiouridine-tRNA biosynthesis. It participates in cofactor biosynthesis; molybdopterin biosynthesis. Functionally, plays a central role in 2-thiolation of mcm(5)S(2)U at tRNA wobble positions of cytosolic tRNA(Lys), tRNA(Glu) and tRNA(Gln). Also essential during biosynthesis of the molybdenum cofactor. Acts by mediating the C-terminal thiocarboxylation of sulfur carriers URM1 and CNX5/MOCS2A. Its N-terminus first activates urm1 and mocs2a as acyl-adenylates (-COAMP), then the persulfide sulfur on the catalytic cysteine is transferred to URM1 and CNX5/MOCS2A to form thiocarboxylation (-COSH) of their C-terminus. The reaction probably involves hydrogen sulfide that is generated from the persulfide intermediate and that acts as a nucleophile towards URM1 and CNX5/MOCS2A. Subsequently, a transient disulfide bond is formed. Does not use thiosulfate as sulfur donor; NFS1 probably acting as a sulfur donor for thiocarboxylation reactions. Required for growth on nitrate as a sole nitrogen source. The polypeptide is Adenylyltransferase and sulfurtransferase uba4 (Ogataea parapolymorpha (strain ATCC 26012 / BCRC 20466 / JCM 22074 / NRRL Y-7560 / DL-1) (Yeast)).